Reading from the N-terminus, the 150-residue chain is Large ribosomal subunit protein bL9 (150 aa).

It belongs to the bacterial ribosomal protein bL9 family.

In terms of biological role, binds to the 23S rRNA. This is Large ribosomal subunit protein bL9 from Yersinia pseudotuberculosis serotype I (strain IP32953).